Consider the following 435-residue polypeptide: NADH-quinone oxidoreductase subunit D (435 aa).

This sequence belongs to the complex I 49 kDa subunit family. As to quaternary structure, NDH-1 is composed of 14 different subunits. Subunits NuoB, C, D, E, F, and G constitute the peripheral sector of the complex.

The protein localises to the cell membrane. It catalyses the reaction a quinone + NADH + 5 H(+)(in) = a quinol + NAD(+) + 4 H(+)(out). Functionally, NDH-1 shuttles electrons from NADH, via FMN and iron-sulfur (Fe-S) centers, to quinones in the respiratory chain. The immediate electron acceptor for the enzyme in this species is believed to be ubiquinone. Couples the redox reaction to proton translocation (for every two electrons transferred, four hydrogen ions are translocated across the cytoplasmic membrane), and thus conserves the redox energy in a proton gradient. In Stenotrophomonas maltophilia (strain K279a), this protein is NADH-quinone oxidoreductase subunit D.